The chain runs to 1268 residues: Neurocan core protein (1268 aa).

An N-terminal signal peptide occupies residues 1–22 (MGAGSVWASGLLLLWLLLLVAG). Positions 37 to 157 (RMLKSGSGPV…EQDLVTLEVT (121 aa)) constitute an Ig-like V-type domain. 5 disulfides stabilise this stretch: C58–C139, C181–C252, C205–C226, C279–C354, and C303–C324. N121 carries an N-linked (GlcNAc...) asparagine glycan. 2 Link domains span residues 159–254 (VVFH…YCFA) and 258–356 (GGEV…YCFR). N339 carries an N-linked (GlcNAc...) asparagine glycan. Disordered regions lie at residues 363-391 (QHGDSEIPSSGDEGEIVSAEGPPGRELKP), 406-442 (PLMSSGEGEPPDLTWTQAPEETLGSTPGGPTLASWPS), 472-540 (PLGT…DQSH), and 574-630 (ISPS…LQAS). 2 O-linked (Xyl...) (chondroitin sulfate) serine glycosylation sites follow: S380 and S410. A compositionally biased stretch (polar residues) spans 419-430 (TWTQAPEETLGS). Positions 575-585 (SPSVPSTESTP) are enriched in low complexity. Residues 608–617 (PSEPPAPSPG) show a composition bias toward pro residues. The segment covering 618 to 630 (PSEALSAVSLQAS) has biased composition (low complexity). Residue N742 is glycosylated (N-linked (GlcNAc...) asparagine). Positions 960–996 (PTDPCENNPCLHGGTCHTNGTVYGCSCDQGYAGENCE) constitute an EGF-like 1 domain. Intrachain disulfides connect C964-C975, C969-C984, C986-C995, C1002-C1013, C1007-C1022, C1024-C1033, C1040-C1051, C1068-C1160, C1136-C1152, C1167-C1210, and C1196-C1223. N-linked (GlcNAc...) asparagine glycosylation occurs at N978. Positions 998–1034 (DIDDCLCSPCENGGTCIDEVNGFICLCLPSYGGSLCE) constitute an EGF-like 2; calcium-binding domain. One can recognise a C-type lectin domain in the interval 1036-1165 (DTEGCDRGWH…LPYVCKKGTV (130 aa)). In terms of domain architecture, Sushi spans 1165–1225 (VLCGPPPAVE…WDRPQIMCIK (61 aa)). N1175 carries an N-linked (GlcNAc...) asparagine glycan. Residues 1228–1255 (RSHRMRRHHHHPHRHHKPRKEHRKHKRH) show a composition bias toward basic residues. Residues 1228–1268 (RSHRMRRHHHHPHRHHKPRKEHRKHKRHPAEDWEKDEGDFC) form a disordered region.

The protein belongs to the aggrecan/versican proteoglycan family. O-glycosylated; contains chondroitin sulfate. As to expression, brain.

The protein localises to the secreted. Functionally, may modulate neuronal adhesion and neurite growth during development by binding to neural cell adhesion molecules (NG-CAM and N-CAM). Chondroitin sulfate proteoglycan; binds to hyaluronic acid. This Mus musculus (Mouse) protein is Neurocan core protein (Ncan).